A 769-amino-acid polypeptide reads, in one-letter code: Serine protease HtrA-like (769 aa).

The span at 1-20 (MDIGKKHVIPKSQYRRKRRE) shows a compositional bias: basic residues. Residues 1–390 (MDIGKKHVIP…ATSKLNKGRA (390 aa)) are disordered. 2 stretches are compositionally biased toward basic and acidic residues: residues 21–64 (FFHN…ERFK) and 71–108 (LEQRNRDVNENKAEESKSNQDSKSAYNRDHYLTDDVSK). Over residues 126–137 (YEQNSEATLSTK) the composition is skewed to polar residues. Basic and acidic residues predominate over residues 138-186 (STDKVESTEMRKLSSDKNKVGHEEQHVLSKPSEHDKETRIDSESSRTDS). Polar residues predominate over residues 247–262 (QQSQNEQTKTYTYGDS). 2 stretches are compositionally biased toward basic and acidic residues: residues 264 to 296 (QNDKSNHENDLSHHIPSISDDKDNVMRENHIVD) and 310 to 330 (KTDDDRKLDEKIHVEDKHKQN). The span at 331 to 347 (ADSSETVGYQSQSTASH) shows a compositional bias: polar residues. A compositionally biased stretch (basic and acidic residues) spans 348–364 (RSTEKRNISINDHDKLN). The span at 365 to 390 (GQKTNTKTSANNNQKKATSKLNKGRA) shows a compositional bias: polar residues. A helical membrane pass occupies residues 410–430 (LVILMGIIILIVILNAIFNNV). Residues H504, D534, and S619 each act as charge relay system in the active site. The PDZ domain occupies 680 to 733 (IVSLNSFERQAVKLPGKVKNGVVVDQVDNNGLADQSGLKKGDVITELDGKLLED).

Belongs to the peptidase S1C family.

The protein resides in the cell membrane. This is Serine protease HtrA-like from Staphylococcus aureus (strain NCTC 8325 / PS 47).